Consider the following 201-residue polypeptide: MLLPYLNKDLIEAGCDEAGRGCLAGSVYAAAVILPVDFKNELLNDSKQLTEHQRYALREIVEREALAWAVGVVTPEEIDEINILNASFLAMHRAVDQLKIRPQHLLIDGNRFKKYQDLPHTTVVKGDGKYLSIAAASILAKTYRDDYMNELHKEYPFYDWNSNKGYPTKKHRAAIREHGTTPYHRMTFNLLGTDPQLEIPF.

Residues Leu10–Pro200 enclose the RNase H type-2 domain. Asp16, Glu17, and Asp108 together coordinate a divalent metal cation.

It belongs to the RNase HII family. Mn(2+) serves as cofactor. Mg(2+) is required as a cofactor.

It is found in the cytoplasm. The catalysed reaction is Endonucleolytic cleavage to 5'-phosphomonoester.. Endonuclease that specifically degrades the RNA of RNA-DNA hybrids. In Phocaeicola vulgatus (strain ATCC 8482 / DSM 1447 / JCM 5826 / CCUG 4940 / NBRC 14291 / NCTC 11154) (Bacteroides vulgatus), this protein is Ribonuclease HII.